Consider the following 400-residue polypeptide: Argininosuccinate synthase (400 aa).

Residue 8 to 16 (AYSGGLDTS) participates in ATP binding. Residue tyrosine 87 participates in L-citrulline binding. Residue glycine 117 participates in ATP binding. L-aspartate is bound by residues threonine 119, asparagine 123, and aspartate 124. Position 123 (asparagine 123) interacts with L-citrulline. L-citrulline-binding residues include arginine 127, serine 175, glutamate 260, and tyrosine 272.

The protein belongs to the argininosuccinate synthase family. Type 1 subfamily. Homotetramer.

It localises to the cytoplasm. It catalyses the reaction L-citrulline + L-aspartate + ATP = 2-(N(omega)-L-arginino)succinate + AMP + diphosphate + H(+). Its pathway is amino-acid biosynthesis; L-arginine biosynthesis; L-arginine from L-ornithine and carbamoyl phosphate: step 2/3. This is Argininosuccinate synthase from Nocardia farcinica (strain IFM 10152).